The following is a 235-amino-acid chain: Exosome complex component RRP46 (235 aa).

A disordered region spans residues 1–21 (MEGAKRADANLLTDTGTESSP). The span at 12–21 (LTDTGTESSP) shows a compositional bias: polar residues. 2 positions are modified to phosphoserine: Ser20 and Ser23.

It belongs to the RNase PH family. As to quaternary structure, homodimer. Component of the RNA exosome core complex (Exo-9), composed of EXOSC1, EXOSC2, EXOSC3, EXOSC4, EXOSC5, EXOSC6, EXOSC7, EXOSC8 and EXOSC9; within the complex interacts with EXOSC3, EXOSC8, and EXOSC9. The catalytically inactive RNA exosome core complex (Exo-9) associates with the catalytic subunit EXOSC10/RRP6. Exo-9 may associate with DIS3 to form the nucleolar exosome complex, or DIS3L to form the cytoplasmic exosome complex. Exo-9 is formed by a hexameric base ring consisting of the heterodimers EXOSC4-EXOSC9, EXOSC5-EXOSC8 and EXOSC6-EXOSC7, and a cap ring consisting of EXOSC1, EXOSC2 and EXOSC3. The RNA exosome complex associates with cofactors C1D/RRP47, MPHOSPH6/MPP6 and MTREX/MTR4. Interacts with GTPBP1. Interacts with ZC3HAV1. Interacts with DDX17 only in the presence of ZC3HAV1 in an RNA-independent manner.

It is found in the nucleus. The protein localises to the nucleolus. Its subcellular location is the cytoplasm. Functionally, non-catalytic component of the RNA exosome complex which has 3'-&gt;5' exoribonuclease activity and participates in a multitude of cellular RNA processing and degradation events. In the nucleus, the RNA exosome complex is involved in proper maturation of stable RNA species such as rRNA, snRNA and snoRNA, in the elimination of RNA processing by-products and non-coding 'pervasive' transcripts, such as antisense RNA species and promoter-upstream transcripts (PROMPTs), and of mRNAs with processing defects, thereby limiting or excluding their export to the cytoplasm. The RNA exosome may be involved in Ig class switch recombination (CSR) and/or Ig variable region somatic hypermutation (SHM) by targeting AICDA deamination activity to transcribed dsDNA substrates. In the cytoplasm, the RNA exosome complex is involved in general mRNA turnover and specifically degrades inherently unstable mRNAs containing AU-rich elements (AREs) within their 3' untranslated regions, and in RNA surveillance pathways, preventing translation of aberrant mRNAs. It seems to be involved in degradation of histone mRNA. The catalytic inactive RNA exosome core complex of 9 subunits (Exo-9) is proposed to play a pivotal role in the binding and presentation of RNA for ribonucleolysis, and to serve as a scaffold for the association with catalytic subunits and accessory proteins or complexes. In vitro, EXOSC5 does not bind or digest single-stranded RNA and binds to double-stranded DNA without detectable DNase activity. The chain is Exosome complex component RRP46 (Exosc5) from Mus musculus (Mouse).